The primary structure comprises 282 residues: Anamorsin homolog (282 aa).

An N-terminal SAM-like domain region spans residues 1–140 (MADLQGKAVL…KPVYEVGAAA (140 aa)). Residues 141–192 (PLKLSFAKKKQSGAAAPAAQVAEVWTIATDDFDDDDLLENDGDELLDAEDLA) are linker. 4 residues coordinate [2Fe-2S] cluster: C203, C214, C217, and C219. The interval 203-219 (CEVGAGGKRRACKNCTC) is fe-S binding site A. C243, C246, C254, and C257 together coordinate [4Fe-4S] cluster. 2 consecutive short sequence motifs (cx2C motif) follow at residues 243–246 (CGNC) and 254–257 (CASC). The tract at residues 243 to 257 (CGNCYLGDAFRCASC) is fe-S binding site B.

The protein belongs to the anamorsin family. Monomer. [2Fe-2S] cluster serves as cofactor. [4Fe-4S] cluster is required as a cofactor.

The protein resides in the cytoplasm. The protein localises to the mitochondrion intermembrane space. In terms of biological role, component of the cytosolic iron-sulfur (Fe-S) protein assembly (CIA) machinery. Required for the maturation of extramitochondrial Fe-S proteins. Part of an electron transfer chain functioning in an early step of cytosolic Fe-S biogenesis, facilitating the de novo assembly of a [4Fe-4S] cluster on the cytosolic Fe-S scaffold complex. Electrons are transferred from NADPH via a FAD- and FMN-containing diflavin oxidoreductase. Together with the diflavin oxidoreductase, also required for the assembly of the diferric tyrosyl radical cofactor of ribonucleotide reductase (RNR), probably by providing electrons for reduction during radical cofactor maturation in the catalytic small subunit. The polypeptide is Anamorsin homolog (Monosiga brevicollis (Choanoflagellate)).